The primary structure comprises 464 residues: tRNA modification GTPase MnmE (464 aa).

(6S)-5-formyl-5,6,7,8-tetrahydrofolate is bound by residues R25, E87, and K130. In terms of domain architecture, TrmE-type G spans G226–G386. N236 serves as a coordination point for K(+). Residues N236–S241, T255–T261, and D280–G283 each bind GTP. Residue S240 participates in Mg(2+) binding. K(+)-binding residues include T255, I257, and T260. T261 contacts Mg(2+). K464 provides a ligand contact to (6S)-5-formyl-5,6,7,8-tetrahydrofolate.

This sequence belongs to the TRAFAC class TrmE-Era-EngA-EngB-Septin-like GTPase superfamily. TrmE GTPase family. In terms of assembly, homodimer. Heterotetramer of two MnmE and two MnmG subunits. It depends on K(+) as a cofactor.

Its subcellular location is the cytoplasm. Exhibits a very high intrinsic GTPase hydrolysis rate. Involved in the addition of a carboxymethylaminomethyl (cmnm) group at the wobble position (U34) of certain tRNAs, forming tRNA-cmnm(5)s(2)U34. This is tRNA modification GTPase MnmE from Burkholderia orbicola (strain AU 1054).